We begin with the raw amino-acid sequence, 311 residues long: 4-diphosphocytidyl-2-C-methyl-D-erythritol kinase (311 aa).

K11 is a catalytic residue. 94–104 (PVAAGLAGGSA) serves as a coordination point for ATP. D136 is an active-site residue.

The protein belongs to the GHMP kinase family. IspE subfamily.

The enzyme catalyses 4-CDP-2-C-methyl-D-erythritol + ATP = 4-CDP-2-C-methyl-D-erythritol 2-phosphate + ADP + H(+). It participates in isoprenoid biosynthesis; isopentenyl diphosphate biosynthesis via DXP pathway; isopentenyl diphosphate from 1-deoxy-D-xylulose 5-phosphate: step 3/6. In terms of biological role, catalyzes the phosphorylation of the position 2 hydroxy group of 4-diphosphocytidyl-2C-methyl-D-erythritol. This is 4-diphosphocytidyl-2-C-methyl-D-erythritol kinase from Synechococcus sp. (strain JA-2-3B'a(2-13)) (Cyanobacteria bacterium Yellowstone B-Prime).